The chain runs to 353 residues: MQEIDGSYGEGGGQLLRTSVALAAITGQSVRVYNIRAKRSNPGLAPQHLTAVKAVAALCRARTEGMEVKSQEIIFRPGPLRGGEYDFPIGTAGSVTLVLQAALPVALACGEKVRMNISGGTDVRAAPPLDYFRYVLLPLVYSMGARAKIEVLLRGYYPRGGGKVVVDVEPCLPLRPVLLNASEGLEGITGFVHISNLPKHIIHRMANGALAELSTFPTPAVGLEVFGKDDAIGEGGAVLLTAHKEHSRLGASAVAERGVPAERLGAEAGRCLREEILSGATLDIHAADQVLIYLALASGVSCFLTRELSSHAATTIWLLEQFLPVRFQVTQEAHLIRVRAKPEFNGMSSFLWR.

Residues Q100 and H285–Q289 each bind ATP. H311 (tele-AMP-histidine intermediate) is an active-site residue.

It belongs to the RNA 3'-terminal cyclase family. Type 1 subfamily.

The protein localises to the cytoplasm. The enzyme catalyses a 3'-end 3'-phospho-ribonucleotide-RNA + ATP = a 3'-end 2',3'-cyclophospho-ribonucleotide-RNA + AMP + diphosphate. Its function is as follows. Catalyzes the conversion of 3'-phosphate to a 2',3'-cyclic phosphodiester at the end of RNA. The mechanism of action of the enzyme occurs in 3 steps: (A) adenylation of the enzyme by ATP; (B) transfer of adenylate to an RNA-N3'P to produce RNA-N3'PP5'A; (C) and attack of the adjacent 2'-hydroxyl on the 3'-phosphorus in the diester linkage to produce the cyclic end product. The biological role of this enzyme is unknown but it is likely to function in some aspects of cellular RNA processing. The sequence is that of RNA 3'-terminal phosphate cyclase from Nitrosospira multiformis (strain ATCC 25196 / NCIMB 11849 / C 71).